We begin with the raw amino-acid sequence, 89 residues long: Large ribosomal subunit protein bL27 (89 aa).

Positions 1–22 (MAHKKGASSSRNGRDSNAQRLG) are disordered. The segment covering 7–19 (ASSSRNGRDSNAQ) has biased composition (polar residues).

Belongs to the bacterial ribosomal protein bL27 family.

This Cutibacterium acnes (strain DSM 16379 / KPA171202) (Propionibacterium acnes) protein is Large ribosomal subunit protein bL27.